The chain runs to 248 residues: tRNA (guanine-N(1)-)-methyltransferase (248 aa).

Residues G117 and 137 to 142 contribute to the S-adenosyl-L-methionine site; that span reads IGDFVL.

It belongs to the RNA methyltransferase TrmD family. Homodimer.

The protein resides in the cytoplasm. The enzyme catalyses guanosine(37) in tRNA + S-adenosyl-L-methionine = N(1)-methylguanosine(37) in tRNA + S-adenosyl-L-homocysteine + H(+). Its function is as follows. Specifically methylates guanosine-37 in various tRNAs. The chain is tRNA (guanine-N(1)-)-methyltransferase from Polynucleobacter necessarius subsp. necessarius (strain STIR1).